We begin with the raw amino-acid sequence, 102 residues long: Urease subunit beta (102 aa).

This sequence belongs to the urease beta subunit family. Heterotrimer of UreA (gamma), UreB (beta) and UreC (alpha) subunits. Three heterotrimers associate to form the active enzyme.

The protein localises to the cytoplasm. The enzyme catalyses urea + 2 H2O + H(+) = hydrogencarbonate + 2 NH4(+). It functions in the pathway nitrogen metabolism; urea degradation; CO(2) and NH(3) from urea (urease route): step 1/1. The polypeptide is Urease subunit beta (Bordetella parapertussis (strain 12822 / ATCC BAA-587 / NCTC 13253)).